The sequence spans 272 residues: Ribonuclease 3 (272 aa).

The disordered stretch occupies residues 1 to 22 (MSLQFLRSEASDGAGETSDASS). The 132-residue stretch at 31–162 (TATHLARLTG…LVGAIYLDQG (132 aa)) folds into the RNase III domain. Residue glutamate 75 participates in Mg(2+) binding. Residue aspartate 79 is part of the active site. Mg(2+) is bound by residues aspartate 148 and glutamate 151. Residue glutamate 151 is part of the active site. One can recognise a DRBM domain in the interval 189 to 258 (NYKSRLIEYT…AKEAMKRLES (70 aa)).

It belongs to the ribonuclease III family. Homodimer. It depends on Mg(2+) as a cofactor.

It localises to the cytoplasm. The catalysed reaction is Endonucleolytic cleavage to 5'-phosphomonoester.. Digests double-stranded RNA. Involved in the processing of primary rRNA transcript to yield the immediate precursors to the large and small rRNAs (23S and 16S). Processes some mRNAs, and tRNAs when they are encoded in the rRNA operon. Processes pre-crRNA and tracrRNA of type II CRISPR loci if present in the organism. The protein is Ribonuclease 3 of Chlorobaculum tepidum (strain ATCC 49652 / DSM 12025 / NBRC 103806 / TLS) (Chlorobium tepidum).